A 187-amino-acid chain; its full sequence is Elongation factor P (187 aa).

This sequence belongs to the elongation factor P family.

It localises to the cytoplasm. It functions in the pathway protein biosynthesis; polypeptide chain elongation. Involved in peptide bond synthesis. Stimulates efficient translation and peptide-bond synthesis on native or reconstituted 70S ribosomes in vitro. Probably functions indirectly by altering the affinity of the ribosome for aminoacyl-tRNA, thus increasing their reactivity as acceptors for peptidyl transferase. The protein is Elongation factor P of Rhodococcus erythropolis (strain PR4 / NBRC 100887).